A 476-amino-acid polypeptide reads, in one-letter code: MKQRLSLAQSALEKLSARRGNTWYPIFHLAPPAGWMNDPNGLIYFNGRYHAFFQHHPASAYQGPMHWGHATSTDMLHWQHELVALAPGDKYDRDGCFSGSAVDDDGVLSLIYTGHICLEDRGNDSIIREVQCLATSHDGIRFEKQGCVLTPPEGIMHFRDPKVWHEDGSWWMVIGARDASDNGQVLLYRGTSLRDWHLEHVLAHSAAGESYMWECPDFFRCGNFHWLMFSPQGMNPSGYRFRNLFQSGVLAGNWKPGSVFALKGVFEELDYGHDFYAPQSMLAEDGRRIIMAWMNMWDSPVPTRSEAWAGCLTLPREVFERDGRLCQRPVREVESLRRKCQPLSPVRLHGVQLLTENVQAAELLVTWHTVDSHAEHYGIRLGEGLRFYVDNQAGRLILWRYYPEEGLDGYRSVELPDTEYLTLRIFLDRSSVEVFVNDGEATLSSRIYPQADSRQLSLYAAHGDAILTDGTLWMLT.

Residues 35–38 (WMND), glutamine 54, 97–98 (FS), 159–160 (RD), glutamate 214, and tryptophan 297 each bind substrate. Residue aspartate 38 is part of the active site.

Belongs to the glycosyl hydrolase 32 family. As to quaternary structure, homodimer.

It catalyses the reaction Hydrolysis of terminal non-reducing beta-D-fructofuranoside residues in beta-D-fructofuranosides.. May prevent the potential hasard of excessive sucrose accumulation. The chain is Raffinose invertase (rafD) from Escherichia coli.